Here is a 550-residue protein sequence, read N- to C-terminus: MEEAELVKERLQAITDKRKIQEEISQKRLKIEEEKLKHQHLKKKALREKWLLDGISSGKEQEEMKKQNQQDQHQIQVLEQSILRLEKEIQDLEKAELQISTNEEAILKKLKSVERTTEDIIRSVKVEKEETSGESVEDIYANIPDLPKSYIPSRLRKERNEGIEDDEQNRKALYAMEIKVEKDLKTGESTVLSSIPLPSDDFKGTGIKVYDDGQKSVYAVSSNHSAAYNGTDGLAPVEVEELLRQASERNSKSPTEYHEPVYANPFCRPTTPQREKVTPGPNFQERVKIKANGLGNDVNGSIHNIDNGLAEERGNNVNHISPARPIPHPRSMIQQAEEMPHIQQERLMTPWEEPNVMQDKYTPSPKSGLSPSRALVEKSERQSSSPPCQEDEKDIRYNIVHSLPSDLDEKEPVTMIFMGYQQAEDNEEEKKLLTGYDGIIHAELVVIDDEEEGEGEAEKPAYHPIAPHSQVFQPAKPTPLPRKRAEVNPHENTNHKSPHKNSISLKEQEESLGSPIHHSPLDVQIAGDGTEDPSLTALRMRMAKLGKKVI.

M1 carries the post-translational modification N-acetylmethionine. Residues 2-106 (EEAELVKERL…LQISTNEEAI (105 aa)) adopt a coiled-coil conformation. Residue K125 forms a Glycyl lysine isopeptide (Lys-Gly) (interchain with G-Cter in SUMO2) linkage. S135 is modified (phosphoserine). A Glycyl lysine isopeptide (Lys-Gly) (interchain with G-Cter in SUMO1); alternate cross-link involves residue K179. A Glycyl lysine isopeptide (Lys-Gly) (interchain with G-Cter in SUMO2); alternate cross-link involves residue K179. Positions 248-259 (ERNSKSPTEYHE) are enriched in basic and acidic residues. The tract at residues 248–280 (ERNSKSPTEYHEPVYANPFCRPTTPQREKVTPG) is disordered. T271 carries the phosphothreonine modification. Phosphoserine occurs at positions 321, 370, 384, and 385. 2 disordered regions span residues 356–393 (VMQDKYTPSPKSGLSPSRALVEKSERQSSSPPCQEDEK) and 463–528 (HPIA…IAGD). The segment covering 483-494 (KRAEVNPHENTN) has biased composition (basic and acidic residues). Phosphoserine is present on residues S497, S514, and S519.

The protein belongs to the paralemmin family. Interacts with GLUL. Phosphorylated.

The protein localises to the cytoplasm. The protein resides in the cell projection. It is found in the dendrite. Its subcellular location is the dendritic spine. In Bos taurus (Bovine), this protein is Palmdelphin (PALMD).